A 222-amino-acid polypeptide reads, in one-letter code: FCS-Like Zinc finger 13 (222 aa).

An FLZ-type zinc finger spans residues 149–192; sequence EFLSSCCLCKKKLQGKDIYMYKGEMGFCSAECRSVQIMNDERQE.

It belongs to the FLZ family. As to quaternary structure, interacts with KIN10 and KIN11 via its FLZ-type zinc finger domain. Interacts with KINB1, KINB2, KINB3 and SNF4 via its N-terminal part.

The protein resides in the nucleus. Its subcellular location is the cytoplasm. Functionally, may act as an adapter to facilitate the interaction of SnRK1 complex with effector proteins, conferring tissue- and stimulus-type specific differences in the SnRK1 regulation pathway. This is FCS-Like Zinc finger 13 from Arabidopsis thaliana (Mouse-ear cress).